We begin with the raw amino-acid sequence, 296 residues long: 4-amino-4-deoxyprephenate dehydrogenase (296 aa).

Positions 9–288 constitute a Prephenate/arogenate dehydrogenase domain; it reads RCVVVGGAGA…EHGAELERLC (280 aa).

The protein belongs to the prephenate/arogenate dehydrogenase family.

It catalyses the reaction 4-amino-4-deoxyprephenate + NAD(+) = 3-(4-aminophenyl)pyruvate + CO2 + NADH + H(+). The protein operates within antibiotic biosynthesis. Functionally, involved in pristinamycin I biosynthesis. Probably catalyzes the formation of 3-(4-aminophenyl)pyruvate from 4-amino-4-deoxyprephenate. The polypeptide is 4-amino-4-deoxyprephenate dehydrogenase (Streptomyces pristinaespiralis).